The primary structure comprises 107 residues: Cytochrome c2 (107 aa).

Heme c-binding residues include Cys14, Cys17, His18, and Met80.

The protein belongs to the cytochrome c family. Binds 1 heme c group covalently per subunit.

Its function is as follows. Cytochrome c2 is found mainly in purple, non-sulfur, photosynthetic bacteria where it functions as the electron donor to the oxidized bacteriochlorophyll in the photophosphorylation pathway. However, it may also have a role in the respiratory chain and is found in some non-photosynthetic bacteria. In Rhodoblastus acidophilus (Rhodopseudomonas acidophila), this protein is Cytochrome c2.